Here is a 155-residue protein sequence, read N- to C-terminus: DNA gyrase inhibitor (155 aa).

Belongs to the DNA gyrase inhibitor family. In terms of assembly, interacts with DNA gyrase.

It localises to the cytoplasm. Functionally, inhibits the supercoiling activity of DNA gyrase. Acts by inhibiting DNA gyrase at an early step, prior to (or at the step of) binding of DNA by the gyrase. It protects cells against toxins that target DNA gyrase, by inhibiting activity of these toxins and reducing the formation of lethal double-strand breaks in the cell. In Citrobacter koseri (strain ATCC BAA-895 / CDC 4225-83 / SGSC4696), this protein is DNA gyrase inhibitor.